A 66-amino-acid chain; its full sequence is ATP synthase subunit c (66 aa).

2 helical membrane passes run 3–23 and 45–65; these read LTFL…GLLM and FLGV…SFII.

The protein belongs to the ATPase C chain family. As to quaternary structure, F-type ATPases have 2 components, F(1) - the catalytic core - and F(0) - the membrane proton channel. F(1) has five subunits: alpha(3), beta(3), gamma(1), delta(1), epsilon(1). F(0) has three main subunits: a(1), b(2) and c(10-14). The alpha and beta chains form an alternating ring which encloses part of the gamma chain. F(1) is attached to F(0) by a central stalk formed by the gamma and epsilon chains, while a peripheral stalk is formed by the delta and b chains.

It localises to the cell membrane. F(1)F(0) ATP synthase produces ATP from ADP in the presence of a proton or sodium gradient. F-type ATPases consist of two structural domains, F(1) containing the extramembraneous catalytic core and F(0) containing the membrane proton channel, linked together by a central stalk and a peripheral stalk. During catalysis, ATP synthesis in the catalytic domain of F(1) is coupled via a rotary mechanism of the central stalk subunits to proton translocation. Its function is as follows. Key component of the F(0) channel; it plays a direct role in translocation across the membrane. A homomeric c-ring of between 10-14 subunits forms the central stalk rotor element with the F(1) delta and epsilon subunits. This Streptococcus pneumoniae serotype 19F (strain G54) protein is ATP synthase subunit c.